Here is a 317-residue protein sequence, read N- to C-terminus: MSTQYLNSNLKVFSLNSNKELAEQIAKHIGVGLGKCSVDRFSDGEVQINIEESIRGCDVFIIQSTSFPVNEHIMELLIMIDALKRASAKTINIVIPYYGYARQDRKARSREPITSKLVANLLETAGATRVITLDLHAPQIQGFFDIPIDHLMGVPILSDYFETKGLKDIVIVSPDHGGVTRARKMADRLKAPIAIIDKRRPRPNVSEVMNIIGNIEGKTALLIDDIIDTAGTITLAANALVENGASEVYACCTHPVLSGPAIERIQNSNIKELVVTNSIVLPEEKKIDKVHELSVAPLIGEAIIRVYEEESVSVLFN.

ATP is bound by residues 43–45 and 102–103; these read DGE and RQ. Mg(2+) contacts are provided by His136 and Asp175. Lys198 is a catalytic residue. D-ribose 5-phosphate is bound by residues Arg200, Asp224, and 228 to 232; that span reads DTAGT.

It belongs to the ribose-phosphate pyrophosphokinase family. Class I subfamily. Homohexamer. The cofactor is Mg(2+).

Its subcellular location is the cytoplasm. It catalyses the reaction D-ribose 5-phosphate + ATP = 5-phospho-alpha-D-ribose 1-diphosphate + AMP + H(+). It functions in the pathway metabolic intermediate biosynthesis; 5-phospho-alpha-D-ribose 1-diphosphate biosynthesis; 5-phospho-alpha-D-ribose 1-diphosphate from D-ribose 5-phosphate (route I): step 1/1. Involved in the biosynthesis of the central metabolite phospho-alpha-D-ribosyl-1-pyrophosphate (PRPP) via the transfer of pyrophosphoryl group from ATP to 1-hydroxyl of ribose-5-phosphate (Rib-5-P). This Corynebacterium ammoniagenes (Brevibacterium ammoniagenes) protein is Ribose-phosphate pyrophosphokinase.